The chain runs to 58 residues: Small ribosomal subunit protein bS21 (58 aa).

A disordered region spans residues 25-58; the sequence is KAGTLQEARKREHYEKPSVKRKRKSEAARKRKKI. Residues 31–42 are compositionally biased toward basic and acidic residues; the sequence is EARKREHYEKPS. Residues 43–58 are compositionally biased toward basic residues; that stretch reads VKRKRKSEAARKRKKI.

Belongs to the bacterial ribosomal protein bS21 family.

The protein is Small ribosomal subunit protein bS21 of Streptococcus thermophilus (strain ATCC BAA-491 / LMD-9).